Reading from the N-terminus, the 411-residue chain is Nuclear receptor subfamily 2 group F member 1-A (411 aa).

Residues methionine 1–glycine 68 are disordered. Low complexity predominate over residues asparagine 24–threonine 46. The segment at residues histidine 73–arginine 148 is a DNA-binding region (nuclear receptor). 2 consecutive NR C4-type zinc fingers follow at residues cysteine 76–cysteine 96 and cysteine 112–cysteine 136. The NR LBD domain occupies tyrosine 174 to glycine 400.

The protein belongs to the nuclear hormone receptor family. NR2 subfamily. First expressed in 11-12 hour embryos. In the rostral brain of 13 hour embryos, expressed within the anterior half of the midbrain and the posterior part of the diencephalon. In the presumptive hindbrain, expressed in a segment-like stripe in the anterior region, resembling the presumptive rhombomere units of the hindbrain. Also detected in the intermediate mesoderm, posterior to the first somite. As somitogenesis proceeds, expression extends posteriorly and flanks the 10 most anterior somites. Expression changes extensively both in level and expansion of domains between 13 and 20 hours. In the rostral brain, expression extends to include a major part of the diencephalon and a caudal portion of the telencephalon. Within the hindbrain, strongly expressed in the two most anterior rhombomeres, and a lower but uniform expression is seen to extend throughout rhombomere 7. In 28 hour embryos, higher and more uniform expression is seen in both rostral and hindbrain areas. Also expressed in the retina of the eye.

Its subcellular location is the nucleus. In terms of biological role, putative transcription factor that is required in photoreceptor cells precursors during eye development. The chain is Nuclear receptor subfamily 2 group F member 1-A (nr2f1a) from Danio rerio (Zebrafish).